A 155-amino-acid chain; its full sequence is Large ribosomal subunit protein eL24 (155 aa).

Residues 98 to 129 (PEVRKAKRDDKAKADKEKKKADKAARKAEKAK) are compositionally biased toward basic and acidic residues. The segment at 98–155 (PEVRKAKRDDKAKADKEKKKADKAARKAEKAKLAAAQGSKVSKQQAKGAFQKVAATSR) is disordered.

Belongs to the eukaryotic ribosomal protein eL24 family.

This is Large ribosomal subunit protein eL24 (RPL24) from Candida glabrata (strain ATCC 2001 / BCRC 20586 / JCM 3761 / NBRC 0622 / NRRL Y-65 / CBS 138) (Yeast).